Here is a 177-residue protein sequence, read N- to C-terminus: ATP-dependent protease subunit HslV (177 aa).

Thr7 is an active-site residue. Na(+) contacts are provided by Ala162, Cys165, and Thr168.

Belongs to the peptidase T1B family. HslV subfamily. As to quaternary structure, a double ring-shaped homohexamer of HslV is capped on each side by a ring-shaped HslU homohexamer. The assembly of the HslU/HslV complex is dependent on binding of ATP.

Its subcellular location is the cytoplasm. The enzyme catalyses ATP-dependent cleavage of peptide bonds with broad specificity.. Its activity is regulated as follows. Allosterically activated by HslU binding. Functionally, protease subunit of a proteasome-like degradation complex believed to be a general protein degrading machinery. The sequence is that of ATP-dependent protease subunit HslV from Thioalkalivibrio sulfidiphilus (strain HL-EbGR7).